A 240-amino-acid polypeptide reads, in one-letter code: Ribonuclease 3 (240 aa).

The RNase III domain maps to Val9–Gly141. Glu54 serves as a coordination point for Mg(2+). Residue Asp58 is part of the active site. Mg(2+) is bound by residues Asp127 and Glu130. Glu130 is an active-site residue. The DRBM domain occupies Asp168 to Lys237.

It belongs to the ribonuclease III family. In terms of assembly, homodimer. It depends on Mg(2+) as a cofactor.

The protein localises to the cytoplasm. It catalyses the reaction Endonucleolytic cleavage to 5'-phosphomonoester.. In terms of biological role, digests double-stranded RNA. Involved in the processing of primary rRNA transcript to yield the immediate precursors to the large and small rRNAs (23S and 16S). Processes some mRNAs, and tRNAs when they are encoded in the rRNA operon. Processes pre-crRNA and tracrRNA of type II CRISPR loci if present in the organism. The polypeptide is Ribonuclease 3 (Thermotoga petrophila (strain ATCC BAA-488 / DSM 13995 / JCM 10881 / RKU-1)).